We begin with the raw amino-acid sequence, 844 residues long: MKCMVTNVLRSLIENDKGELRKLEKMADKVFSYADEMEALTDEQLQAKTAEFKERYNNGESLDDLLYEAYAVVREGARRVLGLYPYKVQVMGGIVLHNGDVPEMRTGEGKTLTATMPVYLNALSGQGVHVVTVNEYLSTRDATEMGELYSWLGLSVGINLAAKSPLEKREAYNCDITYSTNSEIGFDYLRDNMVVRAEDMVQRPLNYALVDEVDSILIDEARTPLIVSGAQGSETNQLYFLADNLVKSLTTEDYIIDIPSKTIGLSDSGIDKAEKFFKLDNLYDIENVAITHFLDNALRANYIMTYDIDYLVNEDQEVMIIDPFTGRTMEGRRYSDGLHQAIEAKEGVPVQNESKTSASITYQNLFRMYKKLSGMTGTGKTEEEEFREIYNIRVVPIPTNRPIARVDHEDLLYPSLEYKFNAVIADVKRRYEKGQPVLVGTVAVETSDLISQKLVAAGVPHEVLNAKNHYREAQIIMNAGQRGAVTIATNMAGRGTDIKLGPGVRELGGLCVIGTERHESRRIDNQLRGRSGRQGDPGESQFYLSLEDDLMKRFGSERIKVFMERMNLTEEESVIKSKMLTRQVESAQKRVEGNNYDSRKQVLQYDDVMREQREIIYRQRQDVITADRDLAPEIKAMMKRTIERQVAGHFLGSKDEAIDGIIKFAHANLVEDDTLSKATFEAMNQKEIVEELYERALRVYDSQVKKLRDEERVREFQKVLILRVVDNKWTDHIDALDQLRNAVSLRGYAQNNPIVEYQSEAFTMFNDMIGAIEFEVTRLMMKAQIHDNIERERTSQEAHTTAVKNIMPNQSHAIQENVSFEGVDRNDPCPCQSGKKFKNCHGRK.

ATP is bound by residues glutamine 89, 107–111 (GEGKT), and aspartate 497. Zn(2+) is bound by residues cysteine 829, cysteine 831, cysteine 840, and histidine 841.

The protein belongs to the SecA family. In terms of assembly, monomer and homodimer. Part of the essential Sec protein translocation apparatus which comprises SecA, SecYEG and auxiliary proteins SecDF. Other proteins may also be involved. Zn(2+) is required as a cofactor.

It localises to the cell membrane. Its subcellular location is the cytoplasm. It carries out the reaction ATP + H2O + cellular proteinSide 1 = ADP + phosphate + cellular proteinSide 2.. Part of the Sec protein translocase complex. Interacts with the SecYEG preprotein conducting channel. Has a central role in coupling the hydrolysis of ATP to the transfer of proteins into and across the cell membrane, serving as an ATP-driven molecular motor driving the stepwise translocation of polypeptide chains across the membrane. The chain is Protein translocase subunit SecA from Streptococcus suis (strain 98HAH33).